The sequence spans 356 residues: Butyrate kinase (356 aa).

Belongs to the acetokinase family.

The protein localises to the cytoplasm. It carries out the reaction butanoate + ATP = butanoyl phosphate + ADP. Its pathway is lipid metabolism; butanoate metabolism. In terms of biological role, catalyzes the conversion of butyryl-CoA through butyryl phosphate to butyrate. This Clostridium tetani (strain Massachusetts / E88) protein is Butyrate kinase.